Consider the following 1410-residue polypeptide: DNA-directed RNA polymerase subunit beta' (1410 aa).

Zn(2+) is bound by residues Cys-70, Cys-72, Cys-85, and Cys-88. Mg(2+) is bound by residues Asp-460, Asp-462, and Asp-464. Zn(2+) is bound by residues Cys-814, Cys-888, Cys-895, and Cys-898.

It belongs to the RNA polymerase beta' chain family. The RNAP catalytic core consists of 2 alpha, 1 beta, 1 beta' and 1 omega subunit. When a sigma factor is associated with the core the holoenzyme is formed, which can initiate transcription. Requires Mg(2+) as cofactor. The cofactor is Zn(2+).

The enzyme catalyses RNA(n) + a ribonucleoside 5'-triphosphate = RNA(n+1) + diphosphate. Functionally, DNA-dependent RNA polymerase catalyzes the transcription of DNA into RNA using the four ribonucleoside triphosphates as substrates. This is DNA-directed RNA polymerase subunit beta' from Shewanella denitrificans (strain OS217 / ATCC BAA-1090 / DSM 15013).